The primary structure comprises 528 residues: Endoglucanase 24 (528 aa).

An N-terminal signal peptide occupies residues 1–24 (MGSKTKGCCGWLIVALVASLVATA). Asp109 acts as the Nucleophile in catalysis. A glycan (N-linked (GlcNAc...) asparagine) is linked at Asn259. The active site involves His446. Asn487 is a glycosylation site (N-linked (GlcNAc...) asparagine). Residues Asp492 and Glu501 contribute to the active site.

The protein belongs to the glycosyl hydrolase 9 (cellulase E) family.

The protein localises to the secreted. The enzyme catalyses Endohydrolysis of (1-&gt;4)-beta-D-glucosidic linkages in cellulose, lichenin and cereal beta-D-glucans.. This is Endoglucanase 24 from Oryza sativa subsp. japonica (Rice).